Reading from the N-terminus, the 1273-residue chain is MYISLIFFLSNHFPPLISIPIFIFLSFSSPTNYTHLKLKKMQPSGDPAPEKEKEMTQPKVSLLKLFSFADFYDCVLMTLGSVGACIHGASVPIFFIFFGKLINIIGLAYLFPKQASHRVAKYSLDFVYLSVAILFSSWLEVACWMHTGERQAAKMRRAYLRSMLSQDISLFDTEASTGEVISAITSDILVVQDALSEKVGNFLHYISRFIAGFAIGFTSVWQISLVTLSIVPLIALAGGIYAFVAIGLIARVRKSYIKAGEIAEEVIGNVRTVQAFTGEERAVRLYREALENTYKYGRKAGLTKGLGLGSMHCVLFLSWALLVWFTSVVVHKDIADGGKSFTTMLNVVIAGLSLGQAAPDISAFVRAKAAAYPIFKMIERNTVTKTSAKSGRKLGKVDGHIQFKDATFSYPSRPDVVIFDRLNLAIPAGKIVALVGGSGSGKSTVISLIERFYEPISGAVLLDGNNISELDIKWLRGQIGLVNQEPALFATTIRENILYGKDDATAEEITRAAKLSEAISFINNLPEGFETQVGERGIQLSGGQKQRIAISRAIVKNPSILLLDEATSALDAESEKSVQEALDRVMVGRTTVVVAHRLSTVRNADIIAVVHEGKIVEFGNHENLISNPDGAYSSLLRLQETASLQRNPSLNRTLSRPHSIKYSRELSRTRSSFCSERESVTRPDGADPSKKVKVTVGRLYSMIRPDWMYGVCGTICAFIAGSQMPLFALGVSQALVSYYSGWDETQKEIKKIAILFCCASVITLIVYTIEHICFGTMGERLTLRVRENMFRAILKNEIGWFDEVDNTSSMLASRLESDATLLKTIVVDRSTILLQNLGLVVTSFIIAFILNWRLTLVVLATYPLVISGHISEKLFMQGYGGDLNKAYLKANMLAGESVSNIRTVAAFCAEEKILELYSRELLEPSKSSFRRGQIAGLFYGVSQFFIFSSYGLALWYGSTLMDKGLAGFKSVMKTFMVLIVTALAMGETLALAPDLLKGNQMVASVFEILDRKTQIVGETSEELNNVEGTIELKGVHFSYPSRPDVVIFRDFDLIVRAGKSMALVGQSGSGKSSVISLILRFYDPTAGKVMIEGKDIKKLDLKALRKHIGLVQQEPALFATTIYENILYGNEGASQSEVVESAMLANAHSFITSLPEGYSTKVGERGVQMSGGQRQRIAIARAILKNPAILLLDEATSALDVESERVVQQALDRLMANRTTVVVAHRLSTIKNADTISVLHGGKIVEQGSHRKLVLNKSGPYFKLISLQQQQQP.

Positions 1–30 (MYISLIFFLSNHFPPLISIPIFIFLSFSSP) are cleaved as a signal peptide. 7 helical membrane-spanning segments follow: residues 66–86 (FSFADFYDCVLMTLGSVGACI), 91–111 (VPIFFIFFGKLINIIGLAYLF), 126–146 (FVYLSVAILFSSWLEVACWMH), 209–229 (FIAGFAIGFTSVWQISLVTLS), 230–250 (IVPLIALAGGIYAFVAIGLIA), 305–325 (GLGLGSMHCVLFLSWALLVWF), and 345–365 (LNVVIAGLSLGQAAPDISAFV). In terms of domain architecture, ABC transmembrane type-1 1 spans 77 to 366 (MTLGSVGACI…AAPDISAFVR (290 aa)). Positions 401 to 637 (IQFKDATFSY…PDGAYSSLLR (237 aa)) constitute an ABC transporter 1 domain. Residue 436-443 (GGSGSGKS) coordinates ATP. Asparagine 466 and asparagine 651 each carry an N-linked (GlcNAc...) asparagine glycan. One can recognise an ABC transmembrane type-1 2 domain in the interval 710-997 (GVCGTICAFI…TLALAPDLLK (288 aa)). The next 2 membrane-spanning stretches (helical) occupy residues 711-731 (VCGTICAFIAGSQMPLFALGV) and 752-772 (IAILFCCASVITLIVYTIEHI). Asparagine 806 carries an N-linked (GlcNAc...) asparagine glycan. Helical transmembrane passes span 832-852 (ILLQNLGLVVTSFIIAFILNW), 934-954 (IAGLFYGVSQFFIFSSYGLAL), and 975-995 (FMVLIVTALAMGETLALAPDL). Residues 1030 to 1266 (IELKGVHFSY…KSGPYFKLIS (237 aa)) form the ABC transporter 2 domain. 1065 to 1072 (GQSGSGKS) lines the ATP pocket. Residues asparagine 1217 and asparagine 1256 are each glycosylated (N-linked (GlcNAc...) asparagine).

This sequence belongs to the ABC transporter superfamily. ABCB family. Multidrug resistance exporter (TC 3.A.1.201) subfamily. In terms of assembly, interacts with 1-naphthylphthalamic acid (NPA).

The protein resides in the membrane. In Arabidopsis thaliana (Mouse-ear cress), this protein is ABC transporter B family member 2 (ABCB2).